Reading from the N-terminus, the 84-residue chain is Small ribosomal subunit protein uS17 (84 aa).

Belongs to the universal ribosomal protein uS17 family. As to quaternary structure, part of the 30S ribosomal subunit.

Its function is as follows. One of the primary rRNA binding proteins, it binds specifically to the 5'-end of 16S ribosomal RNA. The chain is Small ribosomal subunit protein uS17 from Borreliella burgdorferi (strain ATCC 35210 / DSM 4680 / CIP 102532 / B31) (Borrelia burgdorferi).